Reading from the N-terminus, the 326-residue chain is D-amino-acid oxidase (326 aa).

FAD-binding residues include G14, V15, I16, D36, S44, A48, A49, I50, and V157. Residues Y219 and R274 each coordinate D-proline. D-serine contacts are provided by Y219 and R274. FAD is bound by residues R274, G299, G300, G302, and T304. D-proline is bound at residue G300. G300 provides a ligand contact to D-serine.

The protein belongs to the DAMOX/DASOX family. In terms of assembly, homodimer. Requires FAD as cofactor.

It is found in the cytoplasm. It localises to the secreted. The protein localises to the cell wall. It catalyses the reaction a D-alpha-amino acid + O2 + H2O = a 2-oxocarboxylate + H2O2 + NH4(+). The catalysed reaction is D-phenylalanine + O2 + H2O = 3-phenylpyruvate + H2O2 + NH4(+). The enzyme catalyses D-lysine + O2 + H2O = 6-amino-2-oxohexanoate + H2O2 + NH4(+). It carries out the reaction D-methionine + O2 + H2O = 4-methylsulfanyl-2-oxobutanoate + H2O2 + NH4(+). It catalyses the reaction D-arginine + O2 + H2O = 5-guanidino-2-oxopentanoate + H2O2 + NH4(+). The catalysed reaction is D-ornithine + O2 + H2O = 5-amino-2-oxopentanoate + H2O2 + NH4(+). The enzyme catalyses D-leucine + O2 + H2O = 4-methyl-2-oxopentanoate + H2O2 + NH4(+). It carries out the reaction D-alanine + O2 + H2O = pyruvate + H2O2 + NH4(+). It catalyses the reaction D-valine + O2 + H2O = 3-methyl-2-oxobutanoate + H2O2 + NH4(+). The catalysed reaction is D-histidine + O2 + H2O = 3-(imidazol-5-yl)pyruvate + H2O2 + NH4(+). Its function is as follows. Catalyzes the oxidative deamination of D-amino acids with broad substrate specificity. The chain is D-amino-acid oxidase from Glutamicibacter protophormiae (Brevibacterium protophormiae).